Reading from the N-terminus, the 388-residue chain is 3beta-hydroxysteroid dehydrogenase dhs-16 (388 aa).

A helical membrane pass occupies residues 2 to 22 (LELIYILPLLCFVYFLFRRFV). Tyrosine 188 serves as the catalytic Proton acceptor. The next 2 membrane-spanning stretches (helical) occupy residues 300 to 320 (AIFMFIPLSIFPTALQDWILA) and 346 to 366 (IQWIQFLSQIAIIPLLYTIFF).

Belongs to the short-chain dehydrogenases/reductases (SDR) family. As to expression, strongly expressed in the hypodermis and posterior pharyngeal bulb and in a number of unidentified neurons of the head and tail.

Its subcellular location is the membrane. It carries out the reaction lathosterol + NAD(+) = 5alpha-cholest-7-en-3-one + NADH + H(+). Its pathway is steroid hormone biosynthesis; dafachronic acid biosynthesis. In terms of biological role, 3beta-hydroxysteroid dehydrogenase that converts 3beta-hydroxysteroids to 3-ketosteroids, an essential step in the production of dafachronic acids from cholesterol. Catalyzes the dehydrogenation of lathosterol (5alpha-cholest-7-en-3beta-ol) to lathosterone (5alpha-cholest-7-en-3-one), a step required for maximal biosynthesis of Delta(7)-dafachronic acid. Dafachronic acids act as ligands and bind directly to the nuclear hormone receptor (NHR) daf-12, suppressing dauer formation and inducing reproductive growth, they can also regulate C.elegans lifespan. This Caenorhabditis elegans protein is 3beta-hydroxysteroid dehydrogenase dhs-16 (dhs-16).